Reading from the N-terminus, the 319-residue chain is Ribose-phosphate pyrophosphokinase (319 aa).

ATP is bound by residues 40–42 and 99–100; these read DGE and RQ. H134 and D174 together coordinate Mg(2+). The active site involves K198. D-ribose 5-phosphate is bound by residues R200, D224, and 228-232; that span reads DTAGT.

The protein belongs to the ribose-phosphate pyrophosphokinase family. Class I subfamily. As to quaternary structure, homohexamer. It depends on Mg(2+) as a cofactor.

It localises to the cytoplasm. The catalysed reaction is D-ribose 5-phosphate + ATP = 5-phospho-alpha-D-ribose 1-diphosphate + AMP + H(+). It functions in the pathway metabolic intermediate biosynthesis; 5-phospho-alpha-D-ribose 1-diphosphate biosynthesis; 5-phospho-alpha-D-ribose 1-diphosphate from D-ribose 5-phosphate (route I): step 1/1. In terms of biological role, involved in the biosynthesis of the central metabolite phospho-alpha-D-ribosyl-1-pyrophosphate (PRPP) via the transfer of pyrophosphoryl group from ATP to 1-hydroxyl of ribose-5-phosphate (Rib-5-P). The sequence is that of Ribose-phosphate pyrophosphokinase from Xanthomonas axonopodis pv. citri (strain 306).